The sequence spans 584 residues: WD repeat-containing protein JIP5 (584 aa).

4 WD repeats span residues 128–173 (RHKG…GKVD), 180–219 (SAKD…GTNK), 269–314 (DQED…LADQ), and 378–415 (DAVD…DQEE). 2 disordered regions span residues 409-497 (YSDD…SEYI) and 516-563 (KKLI…EKKV). 2 stretches are compositionally biased toward acidic residues: residues 412 to 429 (DQEE…EEDS) and 450 to 460 (FDSENNDDGEE). 2 stretches are compositionally biased toward basic and acidic residues: residues 483 to 493 (TRNEENKDNTK) and 528 to 552 (SKKE…EVPQ).

This sequence belongs to the WD repeat WDR55 family.

It localises to the nucleus. The protein resides in the nucleolus. This chain is WD repeat-containing protein JIP5 (JIP5), found in Lodderomyces elongisporus (strain ATCC 11503 / CBS 2605 / JCM 1781 / NBRC 1676 / NRRL YB-4239) (Yeast).